Consider the following 380-residue polypeptide: Hydrogenase maturation factor HypD1 (380 aa).

3 residues coordinate Fe cation: Cys-36, Cys-64, and Cys-67.

It belongs to the HypD family. Requires [4Fe-4S] cluster as cofactor.

It functions in the pathway protein modification; [NiFe] hydrogenase maturation. In terms of biological role, involved in the maturation of [NiFe] hydrogenases. Involved in the biosynthesis of the Fe(CN)(2)CO cofactor. The protein is Hydrogenase maturation factor HypD1 (hypD1) of Bradyrhizobium diazoefficiens (strain JCM 10833 / BCRC 13528 / IAM 13628 / NBRC 14792 / USDA 110).